A 543-amino-acid polypeptide reads, in one-letter code: Hydroxylamine reductase (543 aa).

Cysteine 3, cysteine 6, cysteine 15, and cysteine 21 together coordinate [4Fe-4S] cluster. 8 residues coordinate hybrid [4Fe-2O-2S] cluster: histidine 239, glutamate 263, cysteine 307, cysteine 398, cysteine 426, cysteine 451, glutamate 486, and lysine 488. Cysteine 398 is modified (cysteine persulfide).

This sequence belongs to the HCP family. It depends on [4Fe-4S] cluster as a cofactor. Hybrid [4Fe-2O-2S] cluster is required as a cofactor.

The protein resides in the cytoplasm. The catalysed reaction is A + NH4(+) + H2O = hydroxylamine + AH2 + H(+). Its function is as follows. Catalyzes the reduction of hydroxylamine to form NH(3) and H(2)O. This chain is Hydroxylamine reductase, found in Methanococcus vannielii (strain ATCC 35089 / DSM 1224 / JCM 13029 / OCM 148 / SB).